We begin with the raw amino-acid sequence, 247 residues long: ATP synthase subunit a, chloroplastic (247 aa).

Transmembrane regions (helical) follow at residues Gln-38–Val-58, Val-95–Leu-115, Ile-134–Ser-154, Leu-199–Leu-219, and Gly-220–Gly-240.

It belongs to the ATPase A chain family. As to quaternary structure, F-type ATPases have 2 components, CF(1) - the catalytic core - and CF(0) - the membrane proton channel. CF(1) has five subunits: alpha(3), beta(3), gamma(1), delta(1), epsilon(1). CF(0) has four main subunits: a, b, b' and c.

Its subcellular location is the plastid. The protein localises to the chloroplast thylakoid membrane. Functionally, key component of the proton channel; it plays a direct role in the translocation of protons across the membrane. This Oenothera argillicola (Appalachian evening primrose) protein is ATP synthase subunit a, chloroplastic.